Consider the following 72-residue polypeptide: ATP synthase subunit c (72 aa).

2 helical membrane passes run 5 to 25 and 51 to 71; these read LLAAGIAVLAGIGAGIGIGIA and AGLSEATAIYGLVVSIILLFV.

It belongs to the ATPase C chain family. As to quaternary structure, F-type ATPases have 2 components, F(1) - the catalytic core - and F(0) - the membrane proton channel. F(1) has five subunits: alpha(3), beta(3), gamma(1), delta(1), epsilon(1). F(0) has three main subunits: a(1), b(2) and c(10-14). The alpha and beta chains form an alternating ring which encloses part of the gamma chain. F(1) is attached to F(0) by a central stalk formed by the gamma and epsilon chains, while a peripheral stalk is formed by the delta and b chains.

The protein localises to the cell membrane. Functionally, f(1)F(0) ATP synthase produces ATP from ADP in the presence of a proton or sodium gradient. F-type ATPases consist of two structural domains, F(1) containing the extramembraneous catalytic core and F(0) containing the membrane proton channel, linked together by a central stalk and a peripheral stalk. During catalysis, ATP synthesis in the catalytic domain of F(1) is coupled via a rotary mechanism of the central stalk subunits to proton translocation. Key component of the F(0) channel; it plays a direct role in translocation across the membrane. A homomeric c-ring of between 10-14 subunits forms the central stalk rotor element with the F(1) delta and epsilon subunits. In Clostridium perfringens (strain ATCC 13124 / DSM 756 / JCM 1290 / NCIMB 6125 / NCTC 8237 / Type A), this protein is ATP synthase subunit c.